Here is a 256-residue protein sequence, read N- to C-terminus: DNA repair protein RecO (256 aa).

It belongs to the RecO family.

Its function is as follows. Involved in DNA repair and RecF pathway recombination. The protein is DNA repair protein RecO of Streptococcus equi subsp. zooepidemicus (strain MGCS10565).